The following is a 112-amino-acid chain: Flowering-promoting factor 1-like protein 2 (112 aa).

This sequence belongs to the FPF1 family. In terms of tissue distribution, expressed in leaves and in some parts of the flowers, mainly in the sepals.

Modulates the competence to flowering of apical meristems. The chain is Flowering-promoting factor 1-like protein 2 (FLP2) from Arabidopsis thaliana (Mouse-ear cress).